The following is a 409-amino-acid chain: Phosphatidylserine decarboxylase proenzyme, mitochondrial (409 aa).

The N-terminal 52 residues, 1–52 (MATSVGHRCLGLLHGVAPWRSSLHPCEITALSQSLQPLRKLPFRAFRTDARK), are a transit peptide targeting the mitochondrion. Topologically, residues 53-63 (IHTAPARTMFL) are mitochondrial matrix. A helical transmembrane segment spans residues 64-82 (LRPVPILLATGGGYAGYRQ). The Mitochondrial intermembrane portion of the chain corresponds to 83 to 409 (YEKYRERELE…IRFGEALGSL (327 aa)). Active-site charge relay system; for autoendoproteolytic cleavage activity residues include aspartate 191, histidine 267, and serine 378. Residue serine 378 is the Schiff-base intermediate with substrate; via pyruvic acid; for decarboxylase activity of the active site. Serine 378 is modified (pyruvic acid (Ser); by autocatalysis).

It belongs to the phosphatidylserine decarboxylase family. PSD-B subfamily. Eukaryotic type I sub-subfamily. Heterodimer of a large membrane-associated beta subunit and a small pyruvoyl-containing alpha subunit. Requires pyruvate as cofactor. Is synthesized initially as an inactive proenzyme. Formation of the active enzyme involves a self-maturation process in which the active site pyruvoyl group is generated from an internal serine residue via an autocatalytic post-translational modification. Two non-identical subunits are generated from the proenzyme in this reaction, and the pyruvate is formed at the N-terminus of the alpha chain, which is derived from the carboxyl end of the proenzyme. The autoendoproteolytic cleavage occurs by a canonical serine protease mechanism, in which the side chain hydroxyl group of the serine supplies its oxygen atom to form the C-terminus of the beta chain, while the remainder of the serine residue undergoes an oxidative deamination to produce ammonia and the pyruvoyl prosthetic group on the alpha chain. During this reaction, the Ser that is part of the protease active site of the proenzyme becomes the pyruvoyl prosthetic group, which constitutes an essential element of the active site of the mature decarboxylase.

The protein resides in the mitochondrion inner membrane. It localises to the lipid droplet. It is found in the cytoplasm. It carries out the reaction a 1,2-diacyl-sn-glycero-3-phospho-L-serine + H(+) = a 1,2-diacyl-sn-glycero-3-phosphoethanolamine + CO2. Its pathway is phospholipid metabolism; phosphatidylethanolamine biosynthesis. Catalyzes the formation of phosphatidylethanolamine (PtdEtn) from phosphatidylserine (PtdSer). Plays a central role in phospholipid metabolism and in the interorganelle trafficking of phosphatidylserine. May be involved in lipid droplet biogenesis at the endoplasmic reticulum membrane. This is Phosphatidylserine decarboxylase proenzyme, mitochondrial from Pongo abelii (Sumatran orangutan).